Reading from the N-terminus, the 61-residue chain is Small ribosomal subunit protein uS14 (61 aa).

Zn(2+) contacts are provided by Cys24, Cys27, Cys40, and Cys43.

Belongs to the universal ribosomal protein uS14 family. Zinc-binding uS14 subfamily. Part of the 30S ribosomal subunit. Contacts proteins S3 and S10. The cofactor is Zn(2+).

In terms of biological role, binds 16S rRNA, required for the assembly of 30S particles and may also be responsible for determining the conformation of the 16S rRNA at the A site. The polypeptide is Small ribosomal subunit protein uS14 (Pelobacter propionicus (strain DSM 2379 / NBRC 103807 / OttBd1)).